The primary structure comprises 91 residues: Small ribosomal subunit protein uS19 (91 aa).

The protein belongs to the universal ribosomal protein uS19 family.

Protein S19 forms a complex with S13 that binds strongly to the 16S ribosomal RNA. The sequence is that of Small ribosomal subunit protein uS19 from Hahella chejuensis (strain KCTC 2396).